A 236-amino-acid polypeptide reads, in one-letter code: Peptidyl-prolyl cis-trans isomerase CYP21-4 (236 aa).

A helical; Signal-anchor for type II membrane protein transmembrane segment spans residues 22–42 (ISISTIIVCNLVVAVVILSLV). Residues 52 to 71 (SRNTIEHETRSQRFEDTNTA) are disordered. A compositionally biased stretch (basic and acidic residues) spans 54-67 (NTIEHETRSQRFED). Residues 82-232 (FADINTSKGL…SPIGITGVVL (151 aa)) form the PPIase cyclophilin-type domain. A glycan (N-linked (GlcNAc...) asparagine) is linked at Asn-86.

Belongs to the cyclophilin-type PPIase family. As to expression, ubiquitous.

It is found in the membrane. The catalysed reaction is [protein]-peptidylproline (omega=180) = [protein]-peptidylproline (omega=0). Its function is as follows. PPIases accelerate the folding of proteins. It catalyzes the cis-trans isomerization of proline imidic peptide bonds in oligopeptides. The polypeptide is Peptidyl-prolyl cis-trans isomerase CYP21-4 (CYP21-4) (Arabidopsis thaliana (Mouse-ear cress)).